A 1282-amino-acid chain; its full sequence is Protein PIR (1282 aa).

As to quaternary structure, binds NAP1 and ROP2, but not ROP8. In terms of tissue distribution, expressed in roots, root hairs, hypocotyls, cotyledons, stems, leaves, trichomes and flowers.

Involved in regulation of actin and microtubule organization. Part of a WAVE complex that activates the ARP2/3 complex. Interacts with the active form of RHO-family GTPases. The sequence is that of Protein PIR (PIR) from Arabidopsis thaliana (Mouse-ear cress).